The primary structure comprises 243 residues: ATP synthase subunit a, chloroplastic (243 aa).

5 consecutive transmembrane segments (helical) span residues 32–52, 91–111, 130–150, 195–215, and 216–236; these read AQVLITSWFVLGLLLGIALIA, IPFVGTLFLFIFVSNWSGALI, INTTVALALLTSVAYFYAGLN, LVVAVLVSLVPLVIPVPMMFL, and GLFTSGIQALIFATLAGAYIG.

Belongs to the ATPase A chain family. As to quaternary structure, F-type ATPases have 2 components, CF(1) - the catalytic core - and CF(0) - the membrane proton channel. CF(1) has five subunits: alpha(3), beta(3), gamma(1), delta(1), epsilon(1). CF(0) has four main subunits: a, b, b' and c.

It localises to the plastid. The protein localises to the chloroplast thylakoid membrane. Functionally, key component of the proton channel; it plays a direct role in the translocation of protons across the membrane. This Chaetosphaeridium globosum (Charophycean green alga) protein is ATP synthase subunit a, chloroplastic.